The chain runs to 200 residues: NAD(P)H dehydrogenase (quinone) (200 aa).

Positions 4–191 (VLVLYYSSYG…GGARYQGALV (188 aa)) constitute a Flavodoxin-like domain. Residues 10-15 (SSYGHI) and 79-81 (TRF) each bind FMN. Y12 serves as a coordination point for NAD(+). W99 serves as a coordination point for substrate. FMN contacts are provided by residues 114 to 120 (STASQHG) and H135.

This sequence belongs to the WrbA family. FMN is required as a cofactor.

The catalysed reaction is a quinone + NADH + H(+) = a quinol + NAD(+). It catalyses the reaction a quinone + NADPH + H(+) = a quinol + NADP(+). This Rhodospirillum centenum (strain ATCC 51521 / SW) protein is NAD(P)H dehydrogenase (quinone).